A 190-amino-acid chain; its full sequence is Probable chemoreceptor glutamine deamidase CheD (190 aa).

It belongs to the CheD family.

It carries out the reaction L-glutaminyl-[protein] + H2O = L-glutamyl-[protein] + NH4(+). Its function is as follows. Probably deamidates glutamine residues to glutamate on methyl-accepting chemotaxis receptors (MCPs), playing an important role in chemotaxis. This is Probable chemoreceptor glutamine deamidase CheD from Acidiphilium cryptum (strain JF-5).